A 624-amino-acid chain; its full sequence is Phosphatidylserine decarboxylase proenzyme 2 (624 aa).

The disordered stretch occupies residues 1–30 (MGHSPSRHNACGGGGGDGESPPSPLPSRFE). One can recognise a C2 domain in the interval 16–129 (GDGESPPSPL…KDLDEHSEVL (114 aa)). EF-hand domains lie at 156–191 (TEQS…FGNK) and 192–227 (LAVA…QQEK). Residues Asp169, Asn171, Asp173, Glu175, Glu180, Asp205, Asn207, Asp209, and Glu216 each contribute to the Ca(2+) site. Residues Asp425, His481, and Ser569 each act as charge relay system; for autoendoproteolytic cleavage activity in the active site. The Schiff-base intermediate with substrate; via pyruvic acid; for decarboxylase activity role is filled by Ser569. Ser569 is modified (pyruvic acid (Ser); by autocatalysis).

This sequence belongs to the phosphatidylserine decarboxylase family. PSD-B subfamily. Eukaryotic type II sub-subfamily. As to quaternary structure, heterodimer of a large membrane-associated beta subunit and a small pyruvoyl-containing alpha subunit. Pyruvate serves as cofactor. In terms of processing, is synthesized initially as an inactive proenzyme. Formation of the active enzyme involves a self-maturation process in which the active site pyruvoyl group is generated from an internal serine residue via an autocatalytic post-translational modification. Two non-identical subunits are generated from the proenzyme in this reaction, and the pyruvate is formed at the N-terminus of the alpha chain, which is derived from the carboxyl end of the proenzyme. The autoendoproteolytic cleavage occurs by a canonical serine protease mechanism, in which the side chain hydroxyl group of the serine supplies its oxygen atom to form the C-terminus of the beta chain, while the remainder of the serine residue undergoes an oxidative deamination to produce ammonia and the pyruvoyl prosthetic group on the alpha chain. During this reaction, the Ser that is part of the protease active site of the proenzyme becomes the pyruvoyl prosthetic group, which constitutes an essential element of the active site of the mature decarboxylase.

The protein localises to the vacuole membrane. It localises to the endoplasmic reticulum membrane. It catalyses the reaction a 1,2-diacyl-sn-glycero-3-phospho-L-serine + H(+) = a 1,2-diacyl-sn-glycero-3-phosphoethanolamine + CO2. Its pathway is phospholipid metabolism; phosphatidylethanolamine biosynthesis; phosphatidylethanolamine from CDP-diacylglycerol: step 2/2. Its function is as follows. Catalyzes the formation of phosphatidylethanolamine (PtdEtn) from phosphatidylserine (PtdSer). Plays a central role in phospholipid metabolism and in the interorganelle trafficking of phosphatidylserine. This Oryza sativa subsp. japonica (Rice) protein is Phosphatidylserine decarboxylase proenzyme 2.